The following is a 549-amino-acid chain: Beta-hexosaminidase Amuc_0868 (549 aa).

The signal sequence occupies residues 1–28; the sequence is MISKCTFSATVFSLFSLCWGAPSSPVLE. Arginine 161 is a substrate binding site. Residues aspartate 190 and histidine 260 each act as charge relay system in the active site. Aspartate 326 lines the substrate pocket. Glutamate 327 acts as the Charge relay system in catalysis. Substrate-binding positions include tryptophan 393, 420–422, and 474–476; these read YFD and WTE. Residues 526 to 549 form a disordered region; that stretch reads GVNYKRPDNGAPAQPKAVITRERR.

The protein belongs to the glycosyl hydrolase 20 family.

It catalyses the reaction Hydrolysis of terminal non-reducing N-acetyl-D-hexosamine residues in N-acetyl-beta-D-hexosaminides.. With respect to regulation, inhibited strongly by Cu(2+), Zn(2+), Cd(2+) and Ni(2+) ions. No effect on activity with Na(+), Li(+), K(+), Ca(2+), Mg(2+) or Mn(2+) ions. In terms of biological role, potentially capable of cleaving the specific glycoside linkages in the process of mucin degradation in human intestinal tract. Hydrolyzes chromogenic substrates pNP-beta-GlcNAc with high activity and pNP-beta-GalNAc to a lesser extent, but not pNP-beta-glucose or pNP-beta-galactose. This chain is Beta-hexosaminidase Amuc_0868, found in Akkermansia muciniphila (strain ATCC BAA-835 / DSM 22959 / JCM 33894 / BCRC 81048 / CCUG 64013 / CIP 107961 / Muc).